The chain runs to 458 residues: Probable mitochondrial chaperone BCS1-B (458 aa).

Over 1 to 26 (MENVITNNNKGLPKSILKFIPEPIQP) the chain is Mitochondrial intermembrane. Residues 27 to 47 (LFENPFFSAGFGLIGVGSILA) form a helical membrane-spanning segment. The Mitochondrial matrix portion of the chain corresponds to 48 to 458 (MGRKGFQQAM…INNLNELIKK (411 aa)). 248 to 255 (GPPGTGKS) serves as a coordination point for ATP.

This sequence belongs to the AAA ATPase family. BCS1 subfamily.

It is found in the mitochondrion inner membrane. It catalyses the reaction ATP + H2O = ADP + phosphate + H(+). Its function is as follows. Chaperone necessary for the assembly of mitochondrial respiratory chain complex III. The protein is Probable mitochondrial chaperone BCS1-B (bcsl1b) of Dictyostelium discoideum (Social amoeba).